The primary structure comprises 169 residues: Calfumirin-1 (169 aa).

EF-hand domains are found at residues 6–41 (NIVE…KKAF), 42–77 (NPER…DKAL), 93–128 (EVEE…TGAK), and 129–164 (DPEK…VQKL). Residues D19, N21, D23, E25, E30, D55, D57, D59, K61, E66, D108, N110, D112, E117, D142, N144, D146, T148, and E153 each contribute to the Ca(2+) site.

Functionally, may be involved in the phase-shift of cells from growth to differentiation. The polypeptide is Calfumirin-1 (cafA) (Dictyostelium discoideum (Social amoeba)).